Reading from the N-terminus, the 303-residue chain is Oxygen-dependent coproporphyrinogen-III oxidase (303 aa).

Substrate is bound at residue Ser93. His97 and His107 together coordinate a divalent metal cation. The Proton donor role is filled by His107. 109–111 contributes to the substrate binding site; that stretch reads NVR. Residues His146 and His176 each coordinate a divalent metal cation. An important for dimerization region spans residues 241–276; sequence YVEFNLVYDRGTLFGLQSGGRTESILMSLPPQVRWG. 259–261 is a substrate binding site; the sequence is GGR.

This sequence belongs to the aerobic coproporphyrinogen-III oxidase family. As to quaternary structure, homodimer. A divalent metal cation serves as cofactor.

It is found in the cytoplasm. The catalysed reaction is coproporphyrinogen III + O2 + 2 H(+) = protoporphyrinogen IX + 2 CO2 + 2 H2O. It functions in the pathway porphyrin-containing compound metabolism; protoporphyrin-IX biosynthesis; protoporphyrinogen-IX from coproporphyrinogen-III (O2 route): step 1/1. Functionally, involved in the heme biosynthesis. Catalyzes the aerobic oxidative decarboxylation of propionate groups of rings A and B of coproporphyrinogen-III to yield the vinyl groups in protoporphyrinogen-IX. This Pseudomonas putida (strain GB-1) protein is Oxygen-dependent coproporphyrinogen-III oxidase.